We begin with the raw amino-acid sequence, 157 residues long: Protein AE7 (157 aa).

Belongs to the MIP18 family. In terms of assembly, part of a complex formed of AE7, CIA1, MMS19 and NAR1. Interacts with CIA1 and MMS19, but not with NAR1. Expressed in the embryo, shoot apical meristem, leaf primordia, inflorescence and all floral organs.

It localises to the nucleus. Its subcellular location is the cytoplasm. Central member of the cytosolic iron-sulfur (Fe-S) protein assembly (CIA) pathway. Involved in leaf polarity formation. Promotes leaf adaxial identity. May play a role in the cell cycle progression and is required for cell proliferation. This chain is Protein AE7, found in Arabidopsis thaliana (Mouse-ear cress).